The chain runs to 522 residues: Lysine--tRNA ligase (522 aa).

The 'HIGH' region motif lies at 44-52; that stretch reads PSGLPHIGT. The 'KMSKS' region motif lies at 290-294; that stretch reads KISKS. Position 293 (Lys-293) interacts with ATP.

Belongs to the class-I aminoacyl-tRNA synthetase family.

The protein resides in the cytoplasm. It catalyses the reaction tRNA(Lys) + L-lysine + ATP = L-lysyl-tRNA(Lys) + AMP + diphosphate. The chain is Lysine--tRNA ligase from Rickettsia bellii (strain OSU 85-389).